Consider the following 122-residue polypeptide: MIQQETYLNVADNSGAKKLRVIRVIGGFHKKYGTVGDIVVCSVREAIPNSDVKKGDVVRAVIVRTKKEIRRSDGTYIRFDDNAAVLIDKFNAPRGTRIFGPVARELREKGFMKIVSLAPEVW.

This sequence belongs to the universal ribosomal protein uL14 family. Part of the 50S ribosomal subunit. Forms a cluster with proteins L3 and L19. In the 70S ribosome, L14 and L19 interact and together make contacts with the 16S rRNA in bridges B5 and B8.

Its function is as follows. Binds to 23S rRNA. Forms part of two intersubunit bridges in the 70S ribosome. This chain is Large ribosomal subunit protein uL14, found in Thermotoga petrophila (strain ATCC BAA-488 / DSM 13995 / JCM 10881 / RKU-1).